The primary structure comprises 505 residues: Tyrosine-protein kinase isoform SRK1 (505 aa).

Composition is skewed to polar residues over residues 1–10 (MGSCCSSQDG) and 18–31 (AGST…SQSV). Positions 1 to 53 (MGSCCSSQDGDGNGKATAGSTVDSHELSQSVKGKIKQPEPKPKPPPQVPPAQD) are disordered. An SH3 domain is found at 54–116 (VKYPIYVGKY…PSNYVAEYKS (63 aa)). The region spanning 122-214 (WFLGKIKRVE…GLCCKLLYPC (93 aa)) is the SH2 domain. In terms of domain architecture, Protein kinase spans 240-493 (IKLLRRLGAG…TLQWQLEEFF (254 aa)). ATP contacts are provided by residues 246–254 (LGAGQFGEV) and K268. D359 acts as the Proton acceptor in catalysis.

This sequence belongs to the protein kinase superfamily. Tyr protein kinase family. SRC subfamily.

It is found in the cytoplasm. The catalysed reaction is L-tyrosyl-[protein] + ATP = O-phospho-L-tyrosyl-[protein] + ADP + H(+). This Spongilla lacustris (Freshwater sponge) protein is Tyrosine-protein kinase isoform SRK1 (SRK1).